Here is a 473-residue protein sequence, read N- to C-terminus: UDP-N-acetylmuramate--L-alanine ligase (473 aa).

ATP is bound at residue 119-125 (GTHGKTT).

It belongs to the MurCDEF family.

It localises to the cytoplasm. It carries out the reaction UDP-N-acetyl-alpha-D-muramate + L-alanine + ATP = UDP-N-acetyl-alpha-D-muramoyl-L-alanine + ADP + phosphate + H(+). Its pathway is cell wall biogenesis; peptidoglycan biosynthesis. Its function is as follows. Cell wall formation. This Caulobacter vibrioides (strain NA1000 / CB15N) (Caulobacter crescentus) protein is UDP-N-acetylmuramate--L-alanine ligase.